Reading from the N-terminus, the 1450-residue chain is DNA-directed RNA polymerase III subunit rpc1 (1450 aa).

The Zn(2+) site is built by C67, C70, C77, H80, C107, C110, and C154. Mg(2+)-binding residues include D491, D493, and D495. The interval 832–844 (PTEFFFHTMGGRE) is bridging helix.

It belongs to the RNA polymerase beta' chain family. In terms of assembly, component of the RNA polymerase III (Pol III) complex consisting of 17 subunits.

It is found in the nucleus. The enzyme catalyses RNA(n) + a ribonucleoside 5'-triphosphate = RNA(n+1) + diphosphate. Functionally, DNA-dependent RNA polymerase catalyzes the transcription of DNA into RNA using the four ribonucleoside triphosphates as substrates. Largest and catalytic core component of RNA polymerase III which synthesizes small RNAs, such as 5S rRNA and tRNAs. Forms the polymerase active center together with the second largest subunit. A single-stranded DNA template strand of the promoter is positioned within the central active site cleft of Pol III. A bridging helix emanates from RPC1 and crosses the cleft near the catalytic site and is thought to promote translocation of Pol III by acting as a ratchet that moves the RNA-DNA hybrid through the active site by switching from straight to bent conformations at each step of nucleotide addition. The protein is DNA-directed RNA polymerase III subunit rpc1 (polr3a) of Dictyostelium discoideum (Social amoeba).